The primary structure comprises 638 residues: Acetolactate synthase 1, chloroplastic (638 aa).

Low complexity predominate over residues 1-19 (MATAAAASTALTGATTAAP). Residues 1–23 (MATAAAASTALTGATTAAPKARR) form a disordered region. A chloroplast-targeting transit peptide spans 1–39 (MATAAAASTALTGATTAAPKARRRAHLLATRRALAAPIR). A thiamine diphosphate-binding site is contributed by Glu-112. Cys-132 and Cys-278 are disulfide-bonded. FAD-binding positions include Arg-214, 320–341 (HGTV…LGVR), and 363–382 (DIDP…ICAD). The segment at 455-535 (QHQMWAAQYY…VKVFVLNNQH (81 aa)) is thiamine pyrophosphate binding. Mg(2+)-binding residues include Asp-506 and Asn-533.

The protein belongs to the TPP enzyme family. The cofactor is Mg(2+). It depends on thiamine diphosphate as a cofactor.

The protein localises to the plastid. It is found in the chloroplast. It carries out the reaction 2 pyruvate + H(+) = (2S)-2-acetolactate + CO2. Its pathway is amino-acid biosynthesis; L-isoleucine biosynthesis; L-isoleucine from 2-oxobutanoate: step 1/4. It functions in the pathway amino-acid biosynthesis; L-valine biosynthesis; L-valine from pyruvate: step 1/4. In Zea mays (Maize), this protein is Acetolactate synthase 1, chloroplastic (ALS1).